Consider the following 342-residue polypeptide: Farnesyl pyrophosphate synthase 2 (342 aa).

Isopentenyl diphosphate-binding residues include Lys48, Arg51, and Gln86. Residues Asp93 and Asp97 each coordinate Mg(2+). Dimethylallyl diphosphate is bound at residue Arg102. Arg103 contacts isopentenyl diphosphate. Dimethylallyl diphosphate contacts are provided by Lys190, Thr191, Gln229, Lys246, and Lys255.

This sequence belongs to the FPP/GGPP synthase family. Mg(2+) serves as cofactor.

It is found in the cytoplasm. It carries out the reaction isopentenyl diphosphate + dimethylallyl diphosphate = (2E)-geranyl diphosphate + diphosphate. It catalyses the reaction isopentenyl diphosphate + (2E)-geranyl diphosphate = (2E,6E)-farnesyl diphosphate + diphosphate. It participates in isoprenoid biosynthesis; farnesyl diphosphate biosynthesis; farnesyl diphosphate from geranyl diphosphate and isopentenyl diphosphate: step 1/1. Its pathway is isoprenoid biosynthesis; geranyl diphosphate biosynthesis; geranyl diphosphate from dimethylallyl diphosphate and isopentenyl diphosphate: step 1/1. Its function is as follows. Catalyzes the sequential condensation of isopentenyl pyrophosphate with the allylic pyrophosphates, dimethylallyl pyrophosphate, and then with the resultant geranylpyrophosphate to the ultimate product farnesyl pyrophosphate. This is Farnesyl pyrophosphate synthase 2 (FPS2) from Parthenium argentatum (Guayule rubber plant).